Consider the following 384-residue polypeptide: Queuine tRNA-ribosyltransferase (384 aa).

The Proton acceptor role is filled by Asp-92. Residues 92-96 (DSGGF), Asp-146, Gln-192, and Gly-219 each bind substrate. The interval 250-256 (GVGTPAE) is RNA binding. Catalysis depends on Asp-269, which acts as the Nucleophile. Residues 274–278 (TRNAR) are RNA binding; important for wobble base 34 recognition. Residues Cys-307, Cys-309, Cys-312, and His-338 each contribute to the Zn(2+) site.

This sequence belongs to the queuine tRNA-ribosyltransferase family. Homodimer. Within each dimer, one monomer is responsible for RNA recognition and catalysis, while the other monomer binds to the replacement base PreQ1. The cofactor is Zn(2+).

The enzyme catalyses 7-aminomethyl-7-carbaguanine + guanosine(34) in tRNA = 7-aminomethyl-7-carbaguanosine(34) in tRNA + guanine. It participates in tRNA modification; tRNA-queuosine biosynthesis. Catalyzes the base-exchange of a guanine (G) residue with the queuine precursor 7-aminomethyl-7-deazaguanine (PreQ1) at position 34 (anticodon wobble position) in tRNAs with GU(N) anticodons (tRNA-Asp, -Asn, -His and -Tyr). Catalysis occurs through a double-displacement mechanism. The nucleophile active site attacks the C1' of nucleotide 34 to detach the guanine base from the RNA, forming a covalent enzyme-RNA intermediate. The proton acceptor active site deprotonates the incoming PreQ1, allowing a nucleophilic attack on the C1' of the ribose to form the product. After dissociation, two additional enzymatic reactions on the tRNA convert PreQ1 to queuine (Q), resulting in the hypermodified nucleoside queuosine (7-(((4,5-cis-dihydroxy-2-cyclopenten-1-yl)amino)methyl)-7-deazaguanosine). The protein is Queuine tRNA-ribosyltransferase of Desulfosudis oleivorans (strain DSM 6200 / JCM 39069 / Hxd3) (Desulfococcus oleovorans).